The following is a 424-amino-acid chain: Protein TUNICAMYCIN INDUCED 1 (424 aa).

The signal sequence occupies residues 1-25 (MGHRVLVYVGALFLILFTIFPSSSA). N-linked (GlcNAc...) asparagine glycosylation is found at Asn-197, Asn-296, and Asn-406.

As to expression, restricted to pollen grains at high levels.

It localises to the endoplasmic reticulum. Its function is as follows. Involved in the regulation of pollen surface morphology, probably by modulating the secretion of proteins and/or lipids during pollen development. The protein is Protein TUNICAMYCIN INDUCED 1 of Arabidopsis thaliana (Mouse-ear cress).